Here is a 499-residue protein sequence, read N- to C-terminus: Glycerol kinase (499 aa).

Residue threonine 13 coordinates ADP. Residues threonine 13, threonine 14, and serine 15 each contribute to the ATP site. Threonine 13 serves as a coordination point for sn-glycerol 3-phosphate. Arginine 17 provides a ligand contact to ADP. 4 residues coordinate sn-glycerol 3-phosphate: arginine 83, glutamate 84, tyrosine 135, and aspartate 244. Residues arginine 83, glutamate 84, tyrosine 135, aspartate 244, and glutamine 245 each coordinate glycerol. 2 residues coordinate ADP: threonine 266 and glycine 309. Residues threonine 266, glycine 309, glutamine 313, and glycine 410 each contribute to the ATP site. 2 residues coordinate ADP: glycine 410 and asparagine 414.

This sequence belongs to the FGGY kinase family.

It carries out the reaction glycerol + ATP = sn-glycerol 3-phosphate + ADP + H(+). Its pathway is polyol metabolism; glycerol degradation via glycerol kinase pathway; sn-glycerol 3-phosphate from glycerol: step 1/1. With respect to regulation, inhibited by fructose 1,6-bisphosphate (FBP). Its function is as follows. Key enzyme in the regulation of glycerol uptake and metabolism. Catalyzes the phosphorylation of glycerol to yield sn-glycerol 3-phosphate. The chain is Glycerol kinase from Paraburkholderia phymatum (strain DSM 17167 / CIP 108236 / LMG 21445 / STM815) (Burkholderia phymatum).